A 692-amino-acid polypeptide reads, in one-letter code: DNA ligase (692 aa).

NAD(+)-binding positions include 35–39 (DLVYD), 88–89 (SL), and glutamate 117. The active-site N6-AMP-lysine intermediate is the lysine 119. NAD(+) contacts are provided by arginine 140, glutamate 176, lysine 301, and lysine 325. Residues cysteine 416, cysteine 419, cysteine 434, and cysteine 439 each coordinate Zn(2+). The BRCT domain occupies 611–692 (LTNQSNSWAS…FDLIKNSKKT (82 aa)).

Belongs to the NAD-dependent DNA ligase family. LigA subfamily. It depends on Mg(2+) as a cofactor. Mn(2+) is required as a cofactor.

It carries out the reaction NAD(+) + (deoxyribonucleotide)n-3'-hydroxyl + 5'-phospho-(deoxyribonucleotide)m = (deoxyribonucleotide)n+m + AMP + beta-nicotinamide D-nucleotide.. Functionally, DNA ligase that catalyzes the formation of phosphodiester linkages between 5'-phosphoryl and 3'-hydroxyl groups in double-stranded DNA using NAD as a coenzyme and as the energy source for the reaction. It is essential for DNA replication and repair of damaged DNA. In Mesomycoplasma hyopneumoniae (strain 232) (Mycoplasma hyopneumoniae), this protein is DNA ligase.